Here is a 526-residue protein sequence, read N- to C-terminus: Methyltetrahydroprotoberberine 14-monooxygenase (526 aa).

Residues 14–34 (LLLQYLQPISVALVVIALVWN) traverse the membrane as a helical segment. Heme is bound at residue Cys-468.

This sequence belongs to the cytochrome P450 family. Requires heme as cofactor. In terms of tissue distribution, mainly expressed in roots, and barely in stems, leaves and carpels.

The protein resides in the membrane. The catalysed reaction is (S)-cis-N-methylcanadine + reduced [NADPH--hemoprotein reductase] + O2 = allocryptopine + oxidized [NADPH--hemoprotein reductase] + H2O + 2 H(+). The enzyme catalyses (S)-cis-N-methylstylopine + reduced [NADPH--hemoprotein reductase] + O2 = protopine + oxidized [NADPH--hemoprotein reductase] + H2O + 2 H(+). It catalyses the reaction (S)-cis-N-methyltetrahydrothalifendine + reduced [NADPH--hemoprotein reductase] + O2 = 7-hydroxy-8-methoxy-11-methyl-17,19-dioxa-11-azatetracyclo[12.7.0.0(4,9).0(16,20)]henicosa-1(21),4(9),5,7,14,16(20)-hexaen-2-one + oxidized [NADPH--hemoprotein reductase] + H2O + 2 H(+). It carries out the reaction (S)-cis-N-methyltetrahydropalmatine + reduced [NADPH--hemoprotein reductase] + O2 = muramine + oxidized [NADPH--hemoprotein reductase] + H2O + 2 H(+). Its pathway is alkaloid biosynthesis. With respect to regulation, repressed by cytochrome P450 inhibitors ketoconazole, metyrapone, prochloraz, ancymidol and cytochrome C. Its function is as follows. Involved in the biosynthesis of the isoquinoline alkaloid sanguinarine. Catalyzes the conversion of N-methylated protoberberine alkaloids N-methylstylopine and N-methylcanadine into protopine and allocryptopine, respectively. Can also use (S)-cis-N-methyltetrahydrothalifendine and (S)-cis-N-methyltetrahydropalmatine as substrates. This chain is Methyltetrahydroprotoberberine 14-monooxygenase, found in Papaver somniferum (Opium poppy).